The chain runs to 78 residues: ATP synthase subunit c (78 aa).

Transmembrane regions (helical) follow at residues 11–31 and 53–73; these read FIGAGLATIGLGGAGIGVGHV and LFVGIAFAEALGIFSFLIALL.

Belongs to the ATPase C chain family. As to quaternary structure, F-type ATPases have 2 components, F(1) - the catalytic core - and F(0) - the membrane proton channel. F(1) has five subunits: alpha(3), beta(3), gamma(1), delta(1), epsilon(1). F(0) has four main subunits: a(1), b(1), b'(1) and c(10-14). The alpha and beta chains form an alternating ring which encloses part of the gamma chain. F(1) is attached to F(0) by a central stalk formed by the gamma and epsilon chains, while a peripheral stalk is formed by the delta, b and b' chains.

The protein localises to the cell inner membrane. Functionally, f(1)F(0) ATP synthase produces ATP from ADP in the presence of a proton or sodium gradient. F-type ATPases consist of two structural domains, F(1) containing the extramembraneous catalytic core and F(0) containing the membrane proton channel, linked together by a central stalk and a peripheral stalk. During catalysis, ATP synthesis in the catalytic domain of F(1) is coupled via a rotary mechanism of the central stalk subunits to proton translocation. Its function is as follows. Key component of the F(0) channel; it plays a direct role in translocation across the membrane. A homomeric c-ring of between 10-14 subunits forms the central stalk rotor element with the F(1) delta and epsilon subunits. This Cereibacter sphaeroides (strain ATCC 17025 / ATH 2.4.3) (Rhodobacter sphaeroides) protein is ATP synthase subunit c.